A 698-amino-acid chain; its full sequence is UvrABC system protein B (698 aa).

The region spanning R28 to I414 is the Helicase ATP-binding domain. Residue G41–S48 participates in ATP binding. Residues Y94–I117 carry the Beta-hairpin motif. A Helicase C-terminal domain is found at Q432–L598. The segment at D609–E629 is disordered. In terms of domain architecture, UVR spans A653–E688.

This sequence belongs to the UvrB family. Forms a heterotetramer with UvrA during the search for lesions. Interacts with UvrC in an incision complex.

The protein localises to the cytoplasm. In terms of biological role, the UvrABC repair system catalyzes the recognition and processing of DNA lesions. A damage recognition complex composed of 2 UvrA and 2 UvrB subunits scans DNA for abnormalities. Upon binding of the UvrA(2)B(2) complex to a putative damaged site, the DNA wraps around one UvrB monomer. DNA wrap is dependent on ATP binding by UvrB and probably causes local melting of the DNA helix, facilitating insertion of UvrB beta-hairpin between the DNA strands. Then UvrB probes one DNA strand for the presence of a lesion. If a lesion is found the UvrA subunits dissociate and the UvrB-DNA preincision complex is formed. This complex is subsequently bound by UvrC and the second UvrB is released. If no lesion is found, the DNA wraps around the other UvrB subunit that will check the other stand for damage. The sequence is that of UvrABC system protein B from Mycobacterium leprae (strain TN).